Reading from the N-terminus, the 331-residue chain is UDP-N-acetylenolpyruvoylglucosamine reductase (331 aa).

An FAD-binding PCMH-type domain is found at 54-221 (RVGGAAELYV…TQATFQLQPG (168 aa)). Arg-200 is an active-site residue. Ser-251 functions as the Proton donor in the catalytic mechanism. The active site involves Glu-321.

The protein belongs to the MurB family. FAD is required as a cofactor.

It localises to the cytoplasm. It catalyses the reaction UDP-N-acetyl-alpha-D-muramate + NADP(+) = UDP-N-acetyl-3-O-(1-carboxyvinyl)-alpha-D-glucosamine + NADPH + H(+). Its pathway is cell wall biogenesis; peptidoglycan biosynthesis. Its function is as follows. Cell wall formation. This Nostoc sp. (strain PCC 7120 / SAG 25.82 / UTEX 2576) protein is UDP-N-acetylenolpyruvoylglucosamine reductase.